The chain runs to 156 residues: Ribosomal RNA large subunit methyltransferase H (156 aa).

S-adenosyl-L-methionine contacts are provided by residues Leu73, Gly104, and 123 to 128; that span reads LSALTL.

This sequence belongs to the RNA methyltransferase RlmH family. Homodimer.

The protein resides in the cytoplasm. It catalyses the reaction pseudouridine(1915) in 23S rRNA + S-adenosyl-L-methionine = N(3)-methylpseudouridine(1915) in 23S rRNA + S-adenosyl-L-homocysteine + H(+). Functionally, specifically methylates the pseudouridine at position 1915 (m3Psi1915) in 23S rRNA. This chain is Ribosomal RNA large subunit methyltransferase H, found in Erwinia tasmaniensis (strain DSM 17950 / CFBP 7177 / CIP 109463 / NCPPB 4357 / Et1/99).